Here is a 1025-residue protein sequence, read N- to C-terminus: Multidrug resistance protein MdtC (1025 aa).

12 helical membrane-spanning segments follow: residues phenylalanine 3 to leucine 23, glutamate 333 to leucine 353, isoleucine 360 to cysteine 380, leucine 387 to leucine 407, valine 431 to leucine 451, valine 469 to methionine 489, leucine 528 to proline 548, valine 853 to serine 873, valine 875 to leucine 895, leucine 897 to valine 917, proline 953 to glycine 973, and isoleucine 984 to valine 1004.

It belongs to the resistance-nodulation-cell division (RND) (TC 2.A.6) family. MdtC subfamily. Part of a tripartite efflux system composed of MdtA, MdtB and MdtC. MdtC forms a heteromultimer with MdtB.

Its subcellular location is the cell inner membrane. Functionally, the MdtABC tripartite complex confers resistance against novobiocin and deoxycholate. In Escherichia coli O9:H4 (strain HS), this protein is Multidrug resistance protein MdtC.